A 980-amino-acid polypeptide reads, in one-letter code: Exportin-T (980 aa).

Belongs to the exportin family. Expressed in roots, stems, leaves, flowers and embryos.

It localises to the nucleus. It is found in the cytoplasm. Functionally, probable tRNA nucleus export receptor which regulates tRNA processing and facilitates tRNA translocation across the nuclear pore complex. Is required for correct leaf initiation at different developmental stages and may play a role in floral patterning. The polypeptide is Exportin-T (Oryza sativa subsp. japonica (Rice)).